The chain runs to 580 residues: uncharacterized protein (580 aa).

One can recognise a PE-PPE domain in the interval 300 to 525 (PGYTATFLET…LRVLVELGYD (226 aa)).

The protein belongs to the mycobacterial PPE family.

This is an uncharacterized protein from Mycobacterium tuberculosis (strain CDC 1551 / Oshkosh).